The chain runs to 199 residues: Small ribosomal subunit protein uS2 (199 aa).

Belongs to the universal ribosomal protein uS2 family.

This Thermoplasma volcanium (strain ATCC 51530 / DSM 4299 / JCM 9571 / NBRC 15438 / GSS1) protein is Small ribosomal subunit protein uS2 (rps2).